A 149-amino-acid chain; its full sequence is D-aminoacyl-tRNA deacylase (149 aa).

The short motif at 137 to 138 (GP) is the Gly-cisPro motif, important for rejection of L-amino acids element.

This sequence belongs to the DTD family. As to quaternary structure, homodimer.

It is found in the cytoplasm. It catalyses the reaction glycyl-tRNA(Ala) + H2O = tRNA(Ala) + glycine + H(+). It carries out the reaction a D-aminoacyl-tRNA + H2O = a tRNA + a D-alpha-amino acid + H(+). Its function is as follows. An aminoacyl-tRNA editing enzyme that deacylates mischarged D-aminoacyl-tRNAs. Also deacylates mischarged glycyl-tRNA(Ala), protecting cells against glycine mischarging by AlaRS. Acts via tRNA-based rather than protein-based catalysis; rejects L-amino acids rather than detecting D-amino acids in the active site. By recycling D-aminoacyl-tRNA to D-amino acids and free tRNA molecules, this enzyme counteracts the toxicity associated with the formation of D-aminoacyl-tRNA entities in vivo and helps enforce protein L-homochirality. The chain is D-aminoacyl-tRNA deacylase from Leuconostoc mesenteroides subsp. mesenteroides (strain ATCC 8293 / DSM 20343 / BCRC 11652 / CCM 1803 / JCM 6124 / NCDO 523 / NBRC 100496 / NCIMB 8023 / NCTC 12954 / NRRL B-1118 / 37Y).